A 297-amino-acid chain; its full sequence is Acetyl-coenzyme A carboxylase carboxyl transferase subunit beta (297 aa).

Residues 1 to 23 (MSWIERILGRTSSSSSSSKSKVP) form a disordered region. Positions 26–295 (VWTKCTSCEQ…PFKTAELIVE (270 aa)) constitute a CoA carboxyltransferase N-terminal domain. Zn(2+) contacts are provided by C30, C33, C49, and C52. The segment at 30–52 (CTSCEQVLYSEELKRNMHVCPKC) adopts a C4-type zinc-finger fold.

It belongs to the AccD/PCCB family. In terms of assembly, acetyl-CoA carboxylase is a heterohexamer composed of biotin carboxyl carrier protein (AccB), biotin carboxylase (AccC) and two subunits each of ACCase subunit alpha (AccA) and ACCase subunit beta (AccD). The cofactor is Zn(2+).

The protein localises to the cytoplasm. The catalysed reaction is N(6)-carboxybiotinyl-L-lysyl-[protein] + acetyl-CoA = N(6)-biotinyl-L-lysyl-[protein] + malonyl-CoA. It functions in the pathway lipid metabolism; malonyl-CoA biosynthesis; malonyl-CoA from acetyl-CoA: step 1/1. Component of the acetyl coenzyme A carboxylase (ACC) complex. Biotin carboxylase (BC) catalyzes the carboxylation of biotin on its carrier protein (BCCP) and then the CO(2) group is transferred by the transcarboxylase to acetyl-CoA to form malonyl-CoA. This Actinobacillus pleuropneumoniae serotype 7 (strain AP76) protein is Acetyl-coenzyme A carboxylase carboxyl transferase subunit beta.